The sequence spans 71 residues: Beta-defensin 25 (71 aa).

The first 22 residues, 1–22, serve as a signal peptide directing secretion; sequence MAKWILLIVALLVLGHVPSGST. 3 disulfide bridges follow: Cys-27-Cys-54, Cys-34-Cys-48, and Cys-38-Cys-55.

The protein belongs to the beta-defensin family.

The protein resides in the secreted. In terms of biological role, has antibacterial activity. This is Beta-defensin 25 (Defb25) from Rattus norvegicus (Rat).